A 590-amino-acid chain; its full sequence is Shugoshin (590 aa).

The tract at residues 1-20 (MPKRKIAPNKESSRRTVSHD) is disordered. The span at 11–20 (ESSRRTVSHD) shows a compositional bias: basic and acidic residues. Positions 25–86 (QIQEFQNLMD…QENVTLRSKT (62 aa)) form a coiled coil. 3 disordered regions span residues 133 to 235 (LRTM…QVEE), 291 to 337 (PSNP…HSMK), and 411 to 550 (RNRE…NSNI). Over residues 173–185 (SFNKDDGPDLEPK) the composition is skewed to basic and acidic residues. The segment covering 302–326 (PSATLPTTTSDASTVYPSSSSSTNS) has biased composition (low complexity). Basic residues predominate over residues 328-337 (PKTKIKHSMK). Residues 448–459 (KKTEDEIHEDTA) are compositionally biased toward basic and acidic residues. A compositionally biased stretch (polar residues) spans 513–526 (IVNNLSDENSTTRP). Positions 527–550 (SKSSKGTSNNNNNYNNFDNNNSNI) are enriched in low complexity.

It belongs to the shugoshin family. Ubiquitinated by the anaphase promoting complex (APC) at the onset of anaphase, conducting to its degradation.

Its subcellular location is the chromosome. The protein localises to the centromere. It localises to the kinetochore. It is found in the cytoplasm. The protein resides in the cytoskeleton. Its subcellular location is the spindle pole. Plays a central role in chromosome cohesion during mitosis and meiosis divisions by preventing premature dissociation of cohesin complex from centromeres after prophase, when most of cohesin complex dissociates from chromosomes arms. Probably act by protecting REC8 and RAD21 from separase degradation during anaphase. Also acts as a spindle checkpoint component required for sensing tension between sister chromatids during mitosis, its degradation when they separate preventing cell cycle arrest and chromosome loss in anaphase, a time when sister chromatids are no longer under tension. The chain is Shugoshin (SGO1) from Saccharomyces cerevisiae (strain ATCC 204508 / S288c) (Baker's yeast).